A 529-amino-acid chain; its full sequence is Bifunctional purine biosynthesis protein PurH (529 aa).

The 148-residue stretch at 1-148 (MQQRRPIRRA…KNHKDVAIVV (148 aa)) folds into the MGS-like domain. N6-acetyllysine is present on K287.

The protein belongs to the PurH family.

It catalyses the reaction (6R)-10-formyltetrahydrofolate + 5-amino-1-(5-phospho-beta-D-ribosyl)imidazole-4-carboxamide = 5-formamido-1-(5-phospho-D-ribosyl)imidazole-4-carboxamide + (6S)-5,6,7,8-tetrahydrofolate. The enzyme catalyses IMP + H2O = 5-formamido-1-(5-phospho-D-ribosyl)imidazole-4-carboxamide. The protein operates within purine metabolism; IMP biosynthesis via de novo pathway; 5-formamido-1-(5-phospho-D-ribosyl)imidazole-4-carboxamide from 5-amino-1-(5-phospho-D-ribosyl)imidazole-4-carboxamide (10-formyl THF route): step 1/1. It functions in the pathway purine metabolism; IMP biosynthesis via de novo pathway; IMP from 5-formamido-1-(5-phospho-D-ribosyl)imidazole-4-carboxamide: step 1/1. The sequence is that of Bifunctional purine biosynthesis protein PurH from Escherichia coli O139:H28 (strain E24377A / ETEC).